We begin with the raw amino-acid sequence, 374 residues long: Succinyl-diaminopimelate desuccinylase (374 aa).

Zn(2+) is bound at residue His-66. Asp-68 is an active-site residue. Position 99 (Asp-99) interacts with Zn(2+). Glu-133 serves as the catalytic Proton acceptor. Glu-134, Glu-162, and His-348 together coordinate Zn(2+).

The protein belongs to the peptidase M20A family. DapE subfamily. Homodimer. Zn(2+) serves as cofactor. Co(2+) is required as a cofactor.

It catalyses the reaction N-succinyl-(2S,6S)-2,6-diaminopimelate + H2O = (2S,6S)-2,6-diaminopimelate + succinate. Its pathway is amino-acid biosynthesis; L-lysine biosynthesis via DAP pathway; LL-2,6-diaminopimelate from (S)-tetrahydrodipicolinate (succinylase route): step 3/3. Its function is as follows. Catalyzes the hydrolysis of N-succinyl-L,L-diaminopimelic acid (SDAP), forming succinate and LL-2,6-diaminopimelate (DAP), an intermediate involved in the bacterial biosynthesis of lysine and meso-diaminopimelic acid, an essential component of bacterial cell walls. In Coxiella burnetii (strain CbuK_Q154) (Coxiella burnetii (strain Q154)), this protein is Succinyl-diaminopimelate desuccinylase.